Reading from the N-terminus, the 559-residue chain is Thrombospondin-related anonymous protein (559 aa).

The signal sequence occupies residues 1–25 (MNHLGNVKYLVIVFLIFFDLFLVNG). The Extracellular segment spans residues 26–496 (RDVQNNIVDE…KKGESDNKYK (471 aa)). Residues 48–234 (DLYLLMDCSG…NVIGPFMKAV (187 aa)) form the VWFA domain. Residues Gln-77 and Gln-78 each participate in an isoglutamyl lysine isopeptide (Gln-Lys) (interchain with K-? in Factor 3(A)) cross-link. An N-linked (GlcNAc...) asparagine glycan is attached at Asn-132. Residues 241-287 (TASCGVWDEWSPCSVTCGKGTRSRKREILHEGCTSEIQEQCEEERCP) form the TSP type-1 domain. Disulfide bonds link Cys-244-Cys-273, Cys-253-Cys-281, and Cys-257-Cys-286. The interval 280-496 (QCEEERCPPK…KKGESDNKYK (217 aa)) is disordered. Residues 283-292 (EERCPPKWEP) are compositionally biased toward basic and acidic residues. Positions 307–309 (RGD) match the Cell attachment site motif. An N-linked (GlcNAc...) asparagine glycan is attached at Asn-310. The segment covering 370-400 (KEVPSDVPKNPEDDREENFDIPKKPENKHDN) has biased composition (basic and acidic residues). A compositionally biased stretch (polar residues) spans 431-440 (DPQSQDNNGN). Over residues 444-459 (PNSEDRETRPHGRNNE) the composition is skewed to basic and acidic residues. N-linked (GlcNAc...) asparagine glycosylation is present at Asn-460. Residues 466-495 (KYNDTPKHPEREEHEKPDNNKKKGESDNKY) are compositionally biased toward basic and acidic residues. A helical membrane pass occupies residues 497–515 (IAGGIAGGLALLACAGLAY). Residues 516-559 (KFVVPGAATPYAGEPAPFDETLGEEDKDLDEPEQFRLPEENEWN) lie on the Cytoplasmic side of the membrane. The tract at residues 523–559 (ATPYAGEPAPFDETLGEEDKDLDEPEQFRLPEENEWN) is disordered. The segment covering 536–547 (TLGEEDKDLDEP) has biased composition (acidic residues). The span at 548-559 (EQFRLPEENEWN) shows a compositional bias: basic and acidic residues.

It localises to the cell membrane. The sequence is that of Thrombospondin-related anonymous protein (TRAP) from Plasmodium falciparum.